The chain runs to 75 residues: Small ribosomal subunit protein bS18 (75 aa).

The protein belongs to the bacterial ribosomal protein bS18 family. As to quaternary structure, part of the 30S ribosomal subunit. Forms a tight heterodimer with protein bS6.

In terms of biological role, binds as a heterodimer with protein bS6 to the central domain of the 16S rRNA, where it helps stabilize the platform of the 30S subunit. This Pasteurella multocida (strain Pm70) protein is Small ribosomal subunit protein bS18.